A 75-amino-acid chain; its full sequence is U-stichotoxin-Hau3a (75 aa).

An N-terminal signal peptide occupies residues 1 to 19; the sequence is MNHLIILVVAAVFLGMASA. The propeptide occupies 20–26; it reads EDVFHKR. 3 disulfide bridges follow: cysteine 31–cysteine 71, cysteine 33–cysteine 61, and cysteine 54–cysteine 72.

Belongs to the sea anemone sodium channel inhibitory toxin family. Type I subfamily. In terms of processing, contains 3 disulfide bonds.

It localises to the secreted. The protein resides in the nematocyst. Toxin that is lethal to crab. In Heteractis aurora (Banded sea anemone), this protein is U-stichotoxin-Hau3a.